Consider the following 673-residue polypeptide: Glycine--tRNA ligase beta subunit (673 aa).

The protein belongs to the class-II aminoacyl-tRNA synthetase family. In terms of assembly, tetramer of two alpha and two beta subunits.

The protein resides in the cytoplasm. The enzyme catalyses tRNA(Gly) + glycine + ATP = glycyl-tRNA(Gly) + AMP + diphosphate. The sequence is that of Glycine--tRNA ligase beta subunit from Lactococcus lactis subsp. lactis (strain IL1403) (Streptococcus lactis).